An 807-amino-acid polypeptide reads, in one-letter code: Leucine--tRNA ligase (807 aa).

The short motif at P40 to H51 is the 'HIGH' region element. Positions K576–S580 match the 'KMSKS' region motif. K579 contacts ATP.

The protein belongs to the class-I aminoacyl-tRNA synthetase family.

Its subcellular location is the cytoplasm. It catalyses the reaction tRNA(Leu) + L-leucine + ATP = L-leucyl-tRNA(Leu) + AMP + diphosphate. This chain is Leucine--tRNA ligase, found in Pelodictyon phaeoclathratiforme (strain DSM 5477 / BU-1).